A 271-amino-acid chain; its full sequence is Glutamate racemase (271 aa).

Substrate-binding positions include 13–14 and 45–46; these read DS and YG. The active-site Proton donor/acceptor is Cys77. Residue 78–79 coordinates substrate; the sequence is NT. Cys192 (proton donor/acceptor) is an active-site residue. 193–194 contributes to the substrate binding site; it reads TH.

This sequence belongs to the aspartate/glutamate racemases family.

The catalysed reaction is L-glutamate = D-glutamate. It participates in cell wall biogenesis; peptidoglycan biosynthesis. In terms of biological role, provides the (R)-glutamate required for cell wall biosynthesis. The sequence is that of Glutamate racemase from Sinorhizobium medicae (strain WSM419) (Ensifer medicae).